A 198-amino-acid polypeptide reads, in one-letter code: 3-isopropylmalate dehydratase small subunit (198 aa).

Belongs to the LeuD family. LeuD type 1 subfamily. In terms of assembly, heterodimer of LeuC and LeuD.

The enzyme catalyses (2R,3S)-3-isopropylmalate = (2S)-2-isopropylmalate. It participates in amino-acid biosynthesis; L-leucine biosynthesis; L-leucine from 3-methyl-2-oxobutanoate: step 2/4. In terms of biological role, catalyzes the isomerization between 2-isopropylmalate and 3-isopropylmalate, via the formation of 2-isopropylmaleate. The chain is 3-isopropylmalate dehydratase small subunit from Mycobacterium avium (strain 104).